We begin with the raw amino-acid sequence, 266 residues long: Glucosamine-6-phosphate deaminase (266 aa).

Asp72 serves as the catalytic Proton acceptor; for enolization step. The For ring-opening step role is filled by Asp141. Catalysis depends on His143, which acts as the Proton acceptor; for ring-opening step. Glu148 functions as the For ring-opening step in the catalytic mechanism.

This sequence belongs to the glucosamine/galactosamine-6-phosphate isomerase family. NagB subfamily. In terms of assembly, homohexamer.

The enzyme catalyses alpha-D-glucosamine 6-phosphate + H2O = beta-D-fructose 6-phosphate + NH4(+). Its pathway is amino-sugar metabolism; N-acetylneuraminate degradation; D-fructose 6-phosphate from N-acetylneuraminate: step 5/5. Allosterically activated by N-acetylglucosamine 6-phosphate (GlcNAc6P). In terms of biological role, catalyzes the reversible isomerization-deamination of glucosamine 6-phosphate (GlcN6P) to form fructose 6-phosphate (Fru6P) and ammonium ion. In Enterobacter sp. (strain 638), this protein is Glucosamine-6-phosphate deaminase.